A 123-amino-acid polypeptide reads, in one-letter code: Immunoglobulin lambda variable 9-49 (123 aa).

A signal peptide spans 1–19 (MAWAPLLLTLLSLLTGSLS). Residues 20-44 (QPVLTQPPSASASLGASVTLTCTLS) form a framework-1 region. The Ig-like domain occupies 21–123 (PVLTQPPSAS…ADHGSGSNFV (103 aa)). Cys41 and Cys112 are joined by a disulfide. Positions 45-51 (SGYSNYK) are complementarity-determining-1. A framework-2 region spans residues 52–68 (VDWYQQRPGKGPRFVMR). The complementarity-determining-2 stretch occupies residues 69–76 (VGTGGIVG). The interval 77-112 (SKGDGIPDRFSVLGSGLNRYLTIKNIQEEDESDYHC) is framework-3. The residue at position 96 (Tyr96) is a Phosphotyrosine. Thr98 bears the Phosphothreonine mark. A complementarity-determining-3 region spans residues 113–123 (GADHGSGSNFV).

As to quaternary structure, immunoglobulins are composed of two identical heavy chains and two identical light chains; disulfide-linked.

It is found in the secreted. It localises to the cell membrane. V region of the variable domain of immunoglobulin light chains that participates in the antigen recognition. Immunoglobulins, also known as antibodies, are membrane-bound or secreted glycoproteins produced by B lymphocytes. In the recognition phase of humoral immunity, the membrane-bound immunoglobulins serve as receptors which, upon binding of a specific antigen, trigger the clonal expansion and differentiation of B lymphocytes into immunoglobulins-secreting plasma cells. Secreted immunoglobulins mediate the effector phase of humoral immunity, which results in the elimination of bound antigens. The antigen binding site is formed by the variable domain of one heavy chain, together with that of its associated light chain. Thus, each immunoglobulin has two antigen binding sites with remarkable affinity for a particular antigen. The variable domains are assembled by a process called V-(D)-J rearrangement and can then be subjected to somatic hypermutations which, after exposure to antigen and selection, allow affinity maturation for a particular antigen. In Homo sapiens (Human), this protein is Immunoglobulin lambda variable 9-49.